Consider the following 364-residue polypeptide: 3-isopropylmalate dehydrogenase (364 aa).

79–92 is a binding site for NAD(+); that stretch reads GPKWNNINETSRPE. Arginine 100, arginine 110, arginine 139, and aspartate 228 together coordinate substrate. Mg(2+)-binding residues include aspartate 228, aspartate 252, and aspartate 256. 286–298 lines the NAD(+) pocket; that stretch reads GSAPDIAGKNIAN.

Belongs to the isocitrate and isopropylmalate dehydrogenases family. LeuB type 1 subfamily. In terms of assembly, homodimer. Mg(2+) serves as cofactor. Mn(2+) is required as a cofactor.

Its subcellular location is the cytoplasm. It carries out the reaction (2R,3S)-3-isopropylmalate + NAD(+) = 4-methyl-2-oxopentanoate + CO2 + NADH. It functions in the pathway amino-acid biosynthesis; L-leucine biosynthesis; L-leucine from 3-methyl-2-oxobutanoate: step 3/4. Catalyzes the oxidation of 3-carboxy-2-hydroxy-4-methylpentanoate (3-isopropylmalate) to 3-carboxy-4-methyl-2-oxopentanoate. The product decarboxylates to 4-methyl-2 oxopentanoate. This chain is 3-isopropylmalate dehydrogenase, found in Blochmanniella floridana.